The following is a 120-amino-acid chain: FK506-binding protein 1B (120 aa).

The tract at residues 1–26 is disordered; it reads MGLEKQTLRMGNGKDHPQPGDPVELN. Residues 20–115 enclose the PPIase FKBP-type domain; sequence GDPVELNYTG…VFEVELLKIK (96 aa).

This sequence belongs to the FKBP-type PPIase family. FKBP1 subfamily.

The catalysed reaction is [protein]-peptidylproline (omega=180) = [protein]-peptidylproline (omega=0). Its activity is regulated as follows. Inhibited by both FK506 and rapamycin. Its function is as follows. PPIases accelerate the folding of proteins. It catalyzes the cis-trans isomerization of proline imidic peptide bonds in oligopeptides. The protein is FK506-binding protein 1B (fpr1B) of Aspergillus fumigatus (strain ATCC MYA-4609 / CBS 101355 / FGSC A1100 / Af293) (Neosartorya fumigata).